Consider the following 620-residue polypeptide: uncharacterized protein (620 aa).

Belongs to the chlamydial CPn_0512/CT_425/TC_0708 family.

This is an uncharacterized protein from Chlamydia pneumoniae (Chlamydophila pneumoniae).